A 62-amino-acid polypeptide reads, in one-letter code: Probable tautomerase RSc0807 (62 aa).

Residue proline 2 is the Proton acceptor; via imino nitrogen of the active site.

It belongs to the 4-oxalocrotonate tautomerase family.

This chain is Probable tautomerase RSc0807, found in Ralstonia nicotianae (strain ATCC BAA-1114 / GMI1000) (Ralstonia solanacearum).